Here is a 230-residue protein sequence, read N- to C-terminus: Orotidine 5'-phosphate decarboxylase (230 aa).

Residues aspartate 11, lysine 34, 61 to 70 (DLKLHDIPNT), threonine 117, arginine 179, glutamine 188, glycine 208, and arginine 209 each bind substrate. The active-site Proton donor is the lysine 63.

It belongs to the OMP decarboxylase family. Type 1 subfamily. In terms of assembly, homodimer.

It carries out the reaction orotidine 5'-phosphate + H(+) = UMP + CO2. The protein operates within pyrimidine metabolism; UMP biosynthesis via de novo pathway; UMP from orotate: step 2/2. In terms of biological role, catalyzes the decarboxylation of orotidine 5'-monophosphate (OMP) to uridine 5'-monophosphate (UMP). This Streptococcus equi subsp. zooepidemicus (strain H70) protein is Orotidine 5'-phosphate decarboxylase.